Reading from the N-terminus, the 136-residue chain is Small ribosomal subunit protein uS8 (136 aa).

Belongs to the universal ribosomal protein uS8 family. As to quaternary structure, part of the 30S ribosomal subunit. Contacts proteins S5 and S12.

In terms of biological role, one of the primary rRNA binding proteins, it binds directly to 16S rRNA central domain where it helps coordinate assembly of the platform of the 30S subunit. This Persephonella marina (strain DSM 14350 / EX-H1) protein is Small ribosomal subunit protein uS8.